A 603-amino-acid chain; its full sequence is F-box only protein 46 (603 aa).

Residues 20–54 are disordered; the sequence is YSQNQPRPPSATLKPPVCPDTSSGTEPDHRPAHLE. Ser21 and Ser67 each carry phosphoserine. Disordered regions lie at residues 111–163, 235–301, 332–359, and 396–442; these read GGSR…PTSS, EAQR…TRAK, EASE…ARDC, and TVSP…GTTD. The residue at position 347 (Thr347) is a Phosphothreonine. Residues 347-356 are compositionally biased toward pro residues; that stretch reads TPPAPPPPPA. The 53-residue stretch at 470–522 folds into the F-box domain; sequence RQYMLLLPEHVLVKIFSFLPTRALAALKCTCHHFKGIIEAFGVRATDSRWSRD.

As to quaternary structure, part of a SCF (SKP1-cullin-F-box) protein ligase complex SCF(FBXO46) composed of CUL1, SKP1, RBX1 and FBXO46. In terms of processing, phosphorylated by ATM in response to DNA damage, promoting ubiquitination and degradation by the SCF(FBXO31) complex. ATM-phosphorylated FBXO46 is ubiquitinated and degradaded by the SCF(FBXO31) complex in response to DNA damage.

Its pathway is protein modification; protein ubiquitination. Functionally, substrate-recognition component of the SCF(FBXO46) protein ligase complex, which mediates the ubiquitination and degradation of target proteins. In absence of stress, the SCF(FBXO46) complex catalyzes ubiquitination and degradation of MTOR-phosphorylated FBXO31. This is F-box only protein 46 (Fbxo46) from Rattus norvegicus (Rat).